The following is a 326-amino-acid chain: Ribose operon repressor (326 aa).

The region spanning 1–56 (MATIKDVAGAAGVSVATVSRNLNDNGYVHEETRTRVIAAMAKLNYYPNEVARSLYK) is the HTH lacI-type domain. Positions 4-23 (IKDVAGAAGVSVATVSRNLN) form a DNA-binding region, H-T-H motif.

Functionally, transcriptional repressor for the ribose rbsDACBK operon. The chain is Ribose operon repressor (rbsR) from Bacillus subtilis (strain 168).